Reading from the N-terminus, the 452-residue chain is Multifunctional glycoside hydrolase (452 aa).

Gln-17, His-118, and Asn-162 together coordinate substrate. The active-site Proton donor is the Glu-163. Residue Tyr-303 coordinates substrate. The active-site Nucleophile is the Glu-361. Residues Trp-407 and 414-415 (EW) each bind substrate.

It belongs to the glycosyl hydrolase 1 family. Monomer. Homotrimer.

It catalyses the reaction Hydrolysis of terminal, non-reducing beta-D-glucosyl residues with release of beta-D-glucose.. The catalysed reaction is Hydrolysis of terminal non-reducing beta-D-galactose residues in beta-D-galactosides.. It carries out the reaction Hydrolysis of (1-&gt;4)-beta-D-xylans, to remove successive D-xylose residues from the non-reducing termini.. The enzyme catalyses Hydrolysis of (1-&gt;4)-linkages in (1-&gt;4)-beta-D-glucans, to remove successive glucose units.. It catalyses the reaction Hydrolysis of (1-&gt;4)-beta-D-glucosidic linkages in cellulose and cellotetraose, releasing cellobiose from the non-reducing ends of the chains.. The protein operates within glycan metabolism; beta-D-glucan degradation. It participates in glycan metabolism; cellulose degradation. Its activity is regulated as follows. Slight activation by Mn(2+), Ni(2+) and K(+). Slight inhibition by Fe(3+), Zn(2+), Co(2+), Mg(2+), Cu(2+), Na(+) and NH4(+). In terms of biological role, has high beta-D-glucosidase, exoglucanase, beta-D-xylosidase, beta-D-galactosidase, and transgalactosylation activities in vitro. Has a very broad substrate specificity with the highest activity with p-nitrophenyl beta-D-galactopyranoside (pNPGal) as substrate. Active with pNP-beta-D-glucopyranoside (pNPGlu), pNP-beta-D-cellobioside (pNPC), lactose, pNP-beta-D-xylopyranoside (pNPX) and cellobiose in the order of decreasing activity, respectively. Very low activity with soluble polysaccharides synanthrin and locust bean gum. Very low, but detectable activity with insoluble substrates such as cotton and filter paper. No activity with pNP-alpha-L-arabinofuranoside (pNPAr) or carboxymethylcellulose (CMC) as substrates. Synthesizes galactooligosaccharides (GalOS) from lactose. Hydrolyzes pretreated corn stover releasing both glucose and xylose. This multifunctional enzyme may provide C.owensensis the benefit of utilizing a wide variety of available carbon sources in its natural growing environment as the ability to convert a wide range of soluble oligosaccharides to monoses is required in order to assimilate them. In Caldicellulosiruptor owensensis (strain ATCC 700167 / DSM 13100 / OL), this protein is Multifunctional glycoside hydrolase.